The primary structure comprises 387 residues: Methyltransferase phomM (387 aa).

Positions P98–L223 are methyltransferase domain.

This sequence belongs to the class I-like SAM-binding methyltransferase superfamily. Erg6/SMT family.

Its pathway is mycotoxin biosynthesis. Its function is as follows. Methyltransferase; part of the gene cluster that mediates the biosynthesis of the phomopsins, a group of hexapeptide mycotoxins which infects lupins and causes lupinosis disease in livestock. Within the pathway, phomM acts as an S-adenosylmethionine-dependent alpha-N-methyltransferase that catalyzes two successive N-methylation reactions, converting N-desmethyl-phomopsin A to phomopsin A and phomopsin A further to an N,N-dimethylated congener called phomopsin E. The pathway starts with the processing of the precursor phomA by several endopeptidases including kexin proteases as well as the cluster-specific S41 family peptidase phomP1 and the oligopeptidase phomG to produce 10 identical copies of the hexapeptide Tyr-Val-Ile-Pro-Ile-Asp. After being excised from the precursor peptide, the core peptides are cyclized and modified post-translationally by enzymes encoded within the gene cluster. The timing and order of proteolysis of the phomA precursor and PTMs are still unknown. Two tyrosinase-like enzymes, phomQ1 and phomQ2, catalyze the chlorination and hydroxylation of Tyr, respectively. PhomYb, is proposed to be involved in the construction of the macrocyclic structure. The other 4 ustYa family proteins may be involved in PTMs that generate the unique structure of phomopsin A. PhomYa is required for the hydroxylation of C-beta of Tyr. PhomYc, phomYd, and phomYe are responsible for the biosynthesis of 2,3-dehydroisoleucine (dIle), 2,3-dehydroaspartic acid (dAsp), and 3,4-dehydroproline (dPro), respectively. While dIle formation by phomYc is indispensable for the installation of dAsp by phomYd, the order of the other PTMs have not been elucidated yet. Most of the biosynthetic enzymes likely have broad substrate specificity, and thus, there might be a metabolic grid from a precursor to phomopsin A. The enzyme(s) responsible for the biosynthesis of 3,4-dehydrovaline (dVal) have also not been identified yet. Finally, phomM acts as an S-adenosylmethionine-dependent alpha-N-methyltransferase that catalyzes two successive N-methylation reactions, converting N-desmethyl-phomopsin A to phomopsin A and phomopsin A further to an N,N-dimethylated congener called phomopsin E. The chain is Methyltransferase phomM from Diaporthe leptostromiformis (Lupinosis disease fungus).